The sequence spans 125 residues: MMCNLLLSFSVLLLSCTHLVAHPVTDTADMTYSGPDSVEEAGGVSPDDFAVSDLNDLLQRAAVVEYSPLLSRENIKVPGQIPKEALRELLLEKPYRLIPPSGLWGSRRQFRKRGGGADCFWKYCV.

Residues 1-21 (MMCNLLLSFSVLLLSCTHLVA) form the signal peptide. A propeptide spanning residues 109–111 (QFR) is cleaved from the precursor. Cys-119 and Cys-124 are oxidised to a cystine.

It belongs to the urotensin-2 family.

It is found in the secreted. Urotensin is found in the teleost caudal neurosecretory system. It has a suggested role in osmoregulation and as a corticotropin-releasing factor. The non-hormonal portion of this precursor may be a urotensin binding protein, urophysin. The protein is Prepro-urotensin II-alpha of Cyprinus carpio (Common carp).